The following is a 255-amino-acid chain: uncharacterized protein (255 aa).

An N-terminal signal peptide occupies residues 1-23 (MKRLNKLVLGIIFLFLVISITAG). A lipid anchor (N-palmitoyl cysteine) is attached at Cys-24. Residue Cys-24 is the site of S-diacylglycerol cysteine attachment.

It belongs to the staphylococcal tandem lipoprotein family.

It is found in the cell membrane. This is an uncharacterized protein from Staphylococcus aureus (strain USA300).